The chain runs to 600 residues: NADH-quinone oxidoreductase subunit C/D (600 aa).

Positions 1–190 are NADH dehydrogenase I subunit C; the sequence is MVNNMTDLTA…SPFELTKAKQ (190 aa). Positions 214 to 600 are NADH dehydrogenase I subunit D; the sequence is DFMFLNLGPN…IDFVMSDVDR (387 aa).

The protein in the N-terminal section; belongs to the complex I 30 kDa subunit family. In the C-terminal section; belongs to the complex I 49 kDa subunit family. As to quaternary structure, NDH-1 is composed of 13 different subunits. Subunits NuoB, CD, E, F, and G constitute the peripheral sector of the complex.

The protein localises to the cell inner membrane. It catalyses the reaction a quinone + NADH + 5 H(+)(in) = a quinol + NAD(+) + 4 H(+)(out). Functionally, NDH-1 shuttles electrons from NADH, via FMN and iron-sulfur (Fe-S) centers, to quinones in the respiratory chain. The immediate electron acceptor for the enzyme in this species is believed to be ubiquinone. Couples the redox reaction to proton translocation (for every two electrons transferred, four hydrogen ions are translocated across the cytoplasmic membrane), and thus conserves the redox energy in a proton gradient. This chain is NADH-quinone oxidoreductase subunit C/D, found in Escherichia coli O127:H6 (strain E2348/69 / EPEC).